The sequence spans 1177 residues: Phospholipid-transporting ATPase IF (1177 aa).

The Cytoplasmic portion of the chain corresponds to 1 to 55 (MWRWIRQQLGFDPPHQSDTRTIYVANRFPQNGLYTPQKFIDNRIISSKYTVWNFV). A helical membrane pass occupies residues 56-77 (PKNLFEQFRRVANFYFLIIFLV). Topologically, residues 78 to 82 (QLMID) are extracellular. Residues 83-104 (TPTSPVTSGLPLFFVITVTAIK) traverse the membrane as a helical segment. Residues 105–289 (QGYEDWLRHN…SAVEKSMNTF (185 aa)) are Cytoplasmic-facing. A helical membrane pass occupies residues 290 to 311 (LIIYLVILISEAVISTILKYTW). Topologically, residues 312–341 (QAEEKWDEPWYNQKTEHQRNSSKILRFISD) are extracellular. Residues 342–359 (FLAFLVLYNFIIPISLYV) form a helical membrane-spanning segment. The Cytoplasmic portion of the chain corresponds to 360 to 876 (TVEMQKFLGS…HGHFYYIRIA (517 aa)). Aspartate 407 acts as the 4-aspartylphosphate intermediate in catalysis. Positions 407, 408, 409, 531, 572, 595, 626, 706, 707, 708, 794, and 800 each coordinate ATP. Aspartate 407 lines the Mg(2+) pocket. Threonine 409 lines the Mg(2+) pocket. Aspartate 821 contacts Mg(2+). 2 residues coordinate ATP: asparagine 824 and aspartate 825. A Mg(2+)-binding site is contributed by aspartate 825. The chain crosses the membrane as a helical span at residues 877 to 898 (TLVQYFFYKNVCFITPQFLYQF). The Extracellular segment spans residues 899–910 (YCLFSQQTLYDS). A helical membrane pass occupies residues 911-930 (VYLTLYNICFTSLPILIYSL). The Cytoplasmic segment spans residues 931 to 960 (LEQHVDPHVLQNKPTLYRDISKNRLLSIKT). The helical transmembrane segment at 961–982 (FLYWTILGFSHAFIFFFGSYLL) threads the bilayer. Residues 983-997 (IGKDTSLLGNGQMFG) are Extracellular-facing. Residues 998-1020 (NWTFGTLVFTVMVITVTVKMALE) form a helical membrane-spanning segment. Topologically, residues 1021 to 1025 (THFWT) are cytoplasmic. The helical transmembrane segment at 1026–1047 (WINHLVTWGSIIFYFVFSLFYG) threads the bilayer. At 1048-1065 (GILWPFLGSQNMYFVFIQ) the chain is on the extracellular side. A helical transmembrane segment spans residues 1066-1090 (LLSSGSAWFAIILMVVTCLFLDIIK). The Cytoplasmic portion of the chain corresponds to 1091–1177 (KVFDRHLHPT…TLSTMDSSTC (87 aa)). At serine 1154 the chain carries Phosphoserine.

The protein belongs to the cation transport ATPase (P-type) (TC 3.A.3) family. Type IV subfamily. In terms of assembly, component of a P4-ATPase flippase complex which consists of a catalytic alpha subunit ATP11B and an accessory beta subunit TMEM30A. Mg(2+) serves as cofactor.

It is found in the recycling endosome membrane. It localises to the early endosome. Its subcellular location is the endoplasmic reticulum. The protein localises to the golgi apparatus. The protein resides in the trans-Golgi network. It carries out the reaction ATP + H2O + phospholipidSide 1 = ADP + phosphate + phospholipidSide 2.. The enzyme catalyses a 1,2-diacyl-sn-glycero-3-phospho-L-serine(out) + ATP + H2O = a 1,2-diacyl-sn-glycero-3-phospho-L-serine(in) + ADP + phosphate + H(+). It catalyses the reaction a 1,2-diacyl-sn-glycero-3-phosphoethanolamine(out) + ATP + H2O = a 1,2-diacyl-sn-glycero-3-phosphoethanolamine(in) + ADP + phosphate + H(+). Its activity is regulated as follows. The ATPase activity is up-regulated by aminophospholipids PS and PE. Catalytic component of a P4-ATPase flippase complex which catalyzes the hydrolysis of ATP coupled to the transport of aminophospholipids, phosphatidylserines (PS) and phosphatidylethanolamines (PE), from the outer to the inner leaflet of intracellular membranes. May contribute to the maintenance of membrane lipid asymmetry in endosome compartment. The sequence is that of Phospholipid-transporting ATPase IF (ATP11B) from Homo sapiens (Human).